Reading from the N-terminus, the 294-residue chain is Cytosolic Fe-S cluster assembly factor CFD1 (294 aa).

25-32 (GKGGVGKS) contacts ATP. Residues cysteine 214 and cysteine 217 each coordinate [4Fe-4S] cluster.

Belongs to the Mrp/NBP35 ATP-binding proteins family. NUBP2/CFD1 subfamily. As to quaternary structure, heterotetramer of 2 NBP35 and 2 CFD1 chains. It depends on [4Fe-4S] cluster as a cofactor.

It localises to the cytoplasm. Its function is as follows. Component of the cytosolic iron-sulfur (Fe/S) protein assembly (CIA) machinery. Required for maturation of extramitochondrial Fe-S proteins. The NBP35-CFD1 heterotetramer forms a Fe-S scaffold complex, mediating the de novo assembly of an Fe-S cluster and its transfer to target apoproteins. Required for biogenesis and export of both ribosomal subunits, which may reflect a role in assembly of the Fe/S clusters in RLI1, a protein which performs rRNA processing and ribosome export. The sequence is that of Cytosolic Fe-S cluster assembly factor CFD1 from Candida albicans (strain SC5314 / ATCC MYA-2876) (Yeast).